The following is a 182-amino-acid chain: Crossover junction endodeoxyribonuclease RuvC (182 aa).

Catalysis depends on residues Asp7, Glu69, and Asp141. Residues Asp7, Glu69, and Asp141 each contribute to the Mg(2+) site.

Belongs to the RuvC family. Homodimer which binds Holliday junction (HJ) DNA. The HJ becomes 2-fold symmetrical on binding to RuvC with unstacked arms; it has a different conformation from HJ DNA in complex with RuvA. In the full resolvosome a probable DNA-RuvA(4)-RuvB(12)-RuvC(2) complex forms which resolves the HJ. Mg(2+) is required as a cofactor.

It localises to the cytoplasm. The enzyme catalyses Endonucleolytic cleavage at a junction such as a reciprocal single-stranded crossover between two homologous DNA duplexes (Holliday junction).. Functionally, the RuvA-RuvB-RuvC complex processes Holliday junction (HJ) DNA during genetic recombination and DNA repair. Endonuclease that resolves HJ intermediates. Cleaves cruciform DNA by making single-stranded nicks across the HJ at symmetrical positions within the homologous arms, yielding a 5'-phosphate and a 3'-hydroxyl group; requires a central core of homology in the junction. The consensus cleavage sequence is 5'-(A/T)TT(C/G)-3'. Cleavage occurs on the 3'-side of the TT dinucleotide at the point of strand exchange. HJ branch migration catalyzed by RuvA-RuvB allows RuvC to scan DNA until it finds its consensus sequence, where it cleaves and resolves the cruciform DNA. This chain is Crossover junction endodeoxyribonuclease RuvC, found in Polaromonas sp. (strain JS666 / ATCC BAA-500).